Reading from the N-terminus, the 227-residue chain is Ferritin light chain (227 aa).

The N-terminal stretch at 1-19 (MKFFVALALFACLGSLALA) is a signal peptide. Cysteines 25 and 44 form a disulfide. The Ferritin-like diiron domain maps to 48 to 208 (FAGIDHIEPE…GYANDLAKLM (161 aa)).

It belongs to the ferritin family. In terms of assembly, oligomer of 12 light (L) chains and 12 heavy (H) chains; L and H chains are disulfide-linked. The functional molecule forms a roughly spherical shell with a diameter of 12 nm and contains a central cavity into which the insoluble ferric iron core is deposited. As to expression, expressed in hemolymph, gut, ovaries and to a lesser extent in testes (at protein level). Expressed in the head (at protein level).

The protein localises to the golgi apparatus. The protein resides in the secreted. Functionally, stores iron in a soluble, non-toxic, readily available form. Important for iron homeostasis. Iron is taken up in the ferrous form and deposited as ferric hydroxides after oxidation. Ferritin is composed of a heavy (H) chain which is responsible for the oxidation and uptake of ferrous iron, and a light (L) chain which facilitates the nucleation of the ferrihydrite iron core. Required for dietary iron absorption in the midgut. Involved in tissue iron detoxification by exporting excess iron. Plays a role in the maintenance of circadian rhythms. Required for embryo and larval development. This chain is Ferritin light chain, found in Drosophila melanogaster (Fruit fly).